Consider the following 120-residue polypeptide: Large ribosomal subunit protein uL24 (120 aa).

The protein belongs to the universal ribosomal protein uL24 family. As to quaternary structure, part of the 50S ribosomal subunit.

Functionally, one of two assembly initiator proteins, it binds directly to the 5'-end of the 23S rRNA, where it nucleates assembly of the 50S subunit. In terms of biological role, located at the polypeptide exit tunnel on the outside of the subunit. This chain is Large ribosomal subunit protein uL24, found in Archaeoglobus fulgidus (strain ATCC 49558 / DSM 4304 / JCM 9628 / NBRC 100126 / VC-16).